Reading from the N-terminus, the 345-residue chain is Dihydroorotate dehydrogenase (quinone) (345 aa).

FMN-binding positions include 65–69 (AGLDK) and Thr-89. Residue Lys-69 coordinates substrate. 114-118 (NRMGF) is a binding site for substrate. FMN contacts are provided by Asn-142 and Asn-175. Asn-175 contributes to the substrate binding site. The active-site Nucleophile is Ser-178. Asn-180 contributes to the substrate binding site. FMN contacts are provided by Lys-220 and Thr-248. 249–250 (NT) contributes to the substrate binding site. Residues Gly-271, Gly-300, and 321–322 (YT) each bind FMN.

The protein belongs to the dihydroorotate dehydrogenase family. Type 2 subfamily. Monomer. FMN serves as cofactor.

The protein resides in the cell membrane. It catalyses the reaction (S)-dihydroorotate + a quinone = orotate + a quinol. It functions in the pathway pyrimidine metabolism; UMP biosynthesis via de novo pathway; orotate from (S)-dihydroorotate (quinone route): step 1/1. Functionally, catalyzes the conversion of dihydroorotate to orotate with quinone as electron acceptor. In Burkholderia cenocepacia (strain ATCC BAA-245 / DSM 16553 / LMG 16656 / NCTC 13227 / J2315 / CF5610) (Burkholderia cepacia (strain J2315)), this protein is Dihydroorotate dehydrogenase (quinone).